The following is a 153-amino-acid chain: Large ribosomal subunit protein uL13 (153 aa).

Belongs to the universal ribosomal protein uL13 family. In terms of assembly, part of the 50S ribosomal subunit.

This protein is one of the early assembly proteins of the 50S ribosomal subunit, although it is not seen to bind rRNA by itself. It is important during the early stages of 50S assembly. This Chelativorans sp. (strain BNC1) protein is Large ribosomal subunit protein uL13.